A 250-amino-acid polypeptide reads, in one-letter code: ATP synthase subunit a (250 aa).

The next 6 membrane-spanning stretches (helical) occupy residues 31–51 (SAYM…GMAG), 85–105 (FFPL…IGII), 115–135 (LIVT…YGLY), 144–164 (LFVP…IEVI), 194–214 (FVGM…LPLG), and 217–237 (VAVT…FTIL).

It belongs to the ATPase A chain family. As to quaternary structure, F-type ATPases have 2 components, CF(1) - the catalytic core - and CF(0) - the membrane proton channel. CF(1) has five subunits: alpha(3), beta(3), gamma(1), delta(1), epsilon(1). CF(0) has four main subunits: a, b, b' and c.

The protein resides in the cell inner membrane. In terms of biological role, key component of the proton channel; it plays a direct role in the translocation of protons across the membrane. The protein is ATP synthase subunit a of Rhodopseudomonas palustris (strain BisB5).